A 130-amino-acid polypeptide reads, in one-letter code: Small ribosomal subunit protein uS9 (130 aa).

It belongs to the universal ribosomal protein uS9 family.

In Pseudomonas putida (strain ATCC 700007 / DSM 6899 / JCM 31910 / BCRC 17059 / LMG 24140 / F1), this protein is Small ribosomal subunit protein uS9.